Reading from the N-terminus, the 834-residue chain is DIS3-like exonuclease 2 (834 aa).

Residues 1–23 show a composition bias toward polar residues; that stretch reads MHNSEFLSPVQSGTQRGTNRSIL. The tract at residues 1-35 is disordered; it reads MHNSEFLSPVQSGTQRGTNRSILNNKKSGKGKKKS. Mg(2+) contacts are provided by Asp354 and Asp363.

This sequence belongs to the RNR ribonuclease family. DIS3L2 subfamily. Mg(2+) is required as a cofactor. Requires Mn(2+) as cofactor.

Its subcellular location is the cytoplasm. It is found in the P-body. Its function is as follows. 3'-5'-exoribonuclease that specifically recognizes RNAs polyuridylated at their 3' end and mediates their degradation. Component of an exosome-independent RNA degradation pathway that mediates degradation of both mRNAs and miRNAs that have been polyuridylated by a terminal uridylyltransferase. Essential for correct mitosis, and negatively regulates cell proliferation. The chain is DIS3-like exonuclease 2 from Xenopus tropicalis (Western clawed frog).